A 247-amino-acid chain; its full sequence is LHFPL tetraspan subfamily member 4 protein (247 aa).

A run of 4 helical transmembrane segments spans residues 22–42 (IGVLWAIFTICFAIINVVVFI), 97–117 (FFVLLSMVLILGCITCFSLFF), 127–147 (ICAWMQLLAALCLVLGCMIFP), and 178–198 (ILAIIGILNALILSFLAFVLG).

Belongs to the LHFP family. As to quaternary structure, interacts with GABA(A) receptor subunits. Identified in a complex of 720 kDa composed of LHFPL4, NLGN2, GABRA1, GABRB2, GABRG2 and GABRB3. Interacts with GABRB3. Interacts with GABRA2. Interacts with GABRG2. Interacts with GABRA1. Interacts with NLGN2; leading to mutual regulation of protein level and synaptic clustering.

It localises to the cell projection. The protein localises to the dendrite. It is found in the postsynaptic cell membrane. Its function is as follows. Plays a role in the regulation of inhibitory synapse formation and function by being involved in maintening gamma-aminobutyric acid receptors (GABAARs) clustering and their associated scaffold proteins at inhibitory synaptic sites. Acts in concert with NLGN2 to recruit or stabilize GABAARs. The chain is LHFPL tetraspan subfamily member 4 protein from Homo sapiens (Human).